Here is a 637-residue protein sequence, read N- to C-terminus: ATP-dependent zinc metalloprotease FtsH (637 aa).

Residues 1-6 (MNNQGR) lie on the Cytoplasmic side of the membrane. A helical transmembrane segment spans residues 7-27 (SILAWAALFIFVILLFNVFQS). Over 28 to 103 (DGLLGVRNNI…VVPLETRMNT (76 aa)) the chain is Periplasmic. The chain crosses the membrane as a helical span at residues 104–124 (FLGFLISWFPMLLLIGVWVFF). Over 125 to 637 (MRQMHGGGKA…TKDKKENIIS (513 aa)) the chain is Cytoplasmic. 195–202 (GPPGTGKT) is a binding site for ATP. H417 provides a ligand contact to Zn(2+). Residue E418 is part of the active site. 2 residues coordinate Zn(2+): H421 and D495.

In the central section; belongs to the AAA ATPase family. The protein in the C-terminal section; belongs to the peptidase M41 family. In terms of assembly, homohexamer. Requires Zn(2+) as cofactor.

Its subcellular location is the cell inner membrane. Acts as a processive, ATP-dependent zinc metallopeptidase for both cytoplasmic and membrane proteins. Plays a role in the quality control of integral membrane proteins. The protein is ATP-dependent zinc metalloprotease FtsH of Rickettsia prowazekii (strain Madrid E).